The chain runs to 235 residues: LexA repressor (235 aa).

Positions 26 to 46 (FDEMKDALDLKSKSGIHRLIT) form a DNA-binding region, H-T-H motif. Catalysis depends on for autocatalytic cleavage activity residues Ser-156 and Lys-194.

It belongs to the peptidase S24 family. As to quaternary structure, homodimer.

The enzyme catalyses Hydrolysis of Ala-|-Gly bond in repressor LexA.. Its function is as follows. Represses a number of genes involved in the response to DNA damage (SOS response), including recA and lexA. In the presence of single-stranded DNA, RecA interacts with LexA causing an autocatalytic cleavage which disrupts the DNA-binding part of LexA, leading to derepression of the SOS regulon and eventually DNA repair. The protein is LexA repressor of Paramagnetospirillum magneticum (strain ATCC 700264 / AMB-1) (Magnetospirillum magneticum).